Consider the following 381-residue polypeptide: Acetyl-CoA:oxalate CoA-transferase (381 aa).

The active site involves His-233.

Belongs to the CoA-transferase III family. Homodimer.

The enzyme catalyses oxalate + acetyl-CoA = oxalyl-CoA + acetate. Functionally, involved in the catabolism of oxalate and in the adapatation to low pH. ACOCT serves to prime the oxalate-induced acid tolerance response (ATR) cycle by producing substrate for oxalyl-CoA decarboxylase (OXC) and formyl-coenzyme A transferase (FCOCT). Catalyzes the reversible conversion of acetyl-CoA and oxalate to oxalyl-CoA and acetate. It can also use formyl-CoA and oxalate to produce oxalyl-CoA and formate with significantly reduced specific activity. This Escherichia coli (strain K12) protein is Acetyl-CoA:oxalate CoA-transferase (yfdE).